A 1014-amino-acid chain; its full sequence is UvrABC system protein A (1014 aa).

Gly-32 to Ser-39 is a binding site for ATP. ABC transporter domains lie at Trp-314–Gln-592 and Gln-612–Arg-941. Gly-645–Ser-652 contacts ATP. Residues Cys-744 to Cys-770 form a C4-type zinc finger. A compositionally biased stretch (low complexity) spans Thr-976–Thr-995. A disordered region spans residues Thr-976 to Ala-1014. The segment covering Ala-996–Ala-1014 has biased composition (basic residues).

Belongs to the ABC transporter superfamily. UvrA family. In terms of assembly, forms a heterotetramer with UvrB during the search for lesions.

The protein localises to the cytoplasm. Functionally, the UvrABC repair system catalyzes the recognition and processing of DNA lesions. UvrA is an ATPase and a DNA-binding protein. A damage recognition complex composed of 2 UvrA and 2 UvrB subunits scans DNA for abnormalities. When the presence of a lesion has been verified by UvrB, the UvrA molecules dissociate. This is UvrABC system protein A from Streptomyces coelicolor (strain ATCC BAA-471 / A3(2) / M145).